Consider the following 234-residue polypeptide: MAKLTKRMRVIREKVDATKQYDINEAISLLKELATAKFVESVDVAVNLGIDARKSDQNVRGATVLPHGTGRSVRVAVFTQGANAEAAKAAGAELVGMEDLAEQIKKGEMNFDVVIASPDAMRVVGQLGQVLGPRGLMPNPKVGTVTPNVAEAVKNAKAGQVRYRNDKNGIIHTTIGKVDFDADKLKENLEALLVALKKAKPSQAKGVYIKKVSISTTMGAGVAVDQAGLSASAN.

This sequence belongs to the universal ribosomal protein uL1 family. As to quaternary structure, part of the 50S ribosomal subunit.

Its function is as follows. Binds directly to 23S rRNA. The L1 stalk is quite mobile in the ribosome, and is involved in E site tRNA release. Protein L1 is also a translational repressor protein, it controls the translation of the L11 operon by binding to its mRNA. The sequence is that of Large ribosomal subunit protein uL1 from Salmonella arizonae (strain ATCC BAA-731 / CDC346-86 / RSK2980).